Here is a 405-residue protein sequence, read N- to C-terminus: Lariat debranching enzyme (405 aa).

The a divalent metal cation site is built by Cys-11, His-13, Asp-40, and Asn-85. The tract at residues Ser-125–Arg-159 is lariat recognition loop. A divalent metal cation contacts are provided by His-179, His-231, and His-233. Positions His-242–Gly-277 are disordered. Positions Ile-264–Glu-274 are enriched in acidic residues. Ser-269 is modified (phosphoserine).

The protein belongs to the lariat debranching enzyme family. It depends on Fe(2+) as a cofactor. The cofactor is Zn(2+). Mn(2+) serves as cofactor.

The protein localises to the nucleus. Its subcellular location is the cytoplasm. Its activity is regulated as follows. Active in presence of diverse metals including Fe(2+), Zn(2+) and Mn(2+). Binds two metal cations in two adjacent alpha and beta metal-binding pockets. The activity is the highest with Fe(2+) bound to the 2 metal-binding sites. Activity is low with Zn(2+) and Mn(2+). Cleaves the 2'-5' phosphodiester linkage at the branch point of lariat intron pre-mRNAs after splicing and converts them into linear molecules that are subsequently degraded, thereby facilitating ribonucleotide turnover. It also participates in Ty1 retrovirus-like transposition via an RNA lariat intermediate in cDNA synthesis. The polypeptide is Lariat debranching enzyme (DBR1) (Saccharomyces cerevisiae (strain ATCC 204508 / S288c) (Baker's yeast)).